The following is a 118-amino-acid chain: Large ribosomal subunit protein uL24c (118 aa).

The protein belongs to the universal ribosomal protein uL24 family. As to quaternary structure, part of the 50S ribosomal subunit.

The protein localises to the plastid. The protein resides in the organellar chromatophore. In terms of biological role, one of two assembly initiator proteins, it binds directly to the 5'-end of the 23S rRNA, where it nucleates assembly of the 50S subunit. This chain is Large ribosomal subunit protein uL24c (rpl24), found in Paulinella chromatophora.